Consider the following 63-residue polypeptide: Large ribosomal subunit protein uL29 (63 aa).

Belongs to the universal ribosomal protein uL29 family.

In Marinomonas sp. (strain MWYL1), this protein is Large ribosomal subunit protein uL29.